Here is a 491-residue protein sequence, read N- to C-terminus: Leucine aminopeptidase 1 (491 aa).

Zn(2+) is bound by residues K252 and D257. Residue K264 is part of the active site. D275, D334, and E336 together coordinate Zn(2+). The active site involves R338.

This sequence belongs to the peptidase M17 family. Zn(2+) is required as a cofactor. In terms of tissue distribution, expressed in the buccal cavity, pharynx, anterior gut and rectum.

It catalyses the reaction Release of an N-terminal amino acid, Xaa-|-Yaa-, in which Xaa is preferably Leu, but may be other amino acids including Pro although not Arg or Lys, and Yaa may be Pro. Amino acid amides and methyl esters are also readily hydrolyzed, but rates on arylamides are exceedingly low.. Probably acts as a digestive enzyme. The polypeptide is Leucine aminopeptidase 1 (lap-1) (Caenorhabditis elegans).